A 640-amino-acid chain; its full sequence is 1-deoxy-D-xylulose-5-phosphate synthase (640 aa).

Thiamine diphosphate is bound by residues H77 and A118–A120. D149 serves as a coordination point for Mg(2+). Thiamine diphosphate contacts are provided by residues G150–S151, N178, Y287, and E369. A Mg(2+)-binding site is contributed by N178.

The protein belongs to the transketolase family. DXPS subfamily. Homodimer. It depends on Mg(2+) as a cofactor. The cofactor is thiamine diphosphate.

The catalysed reaction is D-glyceraldehyde 3-phosphate + pyruvate + H(+) = 1-deoxy-D-xylulose 5-phosphate + CO2. It functions in the pathway metabolic intermediate biosynthesis; 1-deoxy-D-xylulose 5-phosphate biosynthesis; 1-deoxy-D-xylulose 5-phosphate from D-glyceraldehyde 3-phosphate and pyruvate: step 1/1. Catalyzes the acyloin condensation reaction between C atoms 2 and 3 of pyruvate and glyceraldehyde 3-phosphate to yield 1-deoxy-D-xylulose-5-phosphate (DXP). This is 1-deoxy-D-xylulose-5-phosphate synthase from Caulobacter vibrioides (strain NA1000 / CB15N) (Caulobacter crescentus).